We begin with the raw amino-acid sequence, 374 residues long: Alanine racemase (374 aa).

The active-site Proton acceptor; specific for D-alanine is the K34. Residue K34 is modified to N6-(pyridoxal phosphate)lysine. Residue R147 participates in substrate binding. Y271 (proton acceptor; specific for L-alanine) is an active-site residue. Residue M319 participates in substrate binding.

This sequence belongs to the alanine racemase family. The cofactor is pyridoxal 5'-phosphate.

It carries out the reaction L-alanine = D-alanine. It functions in the pathway amino-acid biosynthesis; D-alanine biosynthesis; D-alanine from L-alanine: step 1/1. In terms of biological role, catalyzes the interconversion of L-alanine and D-alanine. May also act on other amino acids. This Haemophilus ducreyi (strain 35000HP / ATCC 700724) protein is Alanine racemase (alr).